A 210-amino-acid polypeptide reads, in one-letter code: Pyridoxine/pyridoxamine 5'-phosphate oxidase (210 aa).

Substrate is bound by residues 7 to 10 (RDEY) and lysine 65. Residues 60–65 (RMVLLK), 75–76 (FT), arginine 81, lysine 82, and glutamine 104 contribute to the FMN site. Residues tyrosine 122, arginine 126, and serine 130 each contribute to the substrate site. Residues 139–140 (QS) and tryptophan 183 each bind FMN. Residue 189–191 (RLH) participates in substrate binding. FMN is bound at residue arginine 193.

It belongs to the pyridoxamine 5'-phosphate oxidase family. In terms of assembly, homodimer. The cofactor is FMN.

It catalyses the reaction pyridoxamine 5'-phosphate + O2 + H2O = pyridoxal 5'-phosphate + H2O2 + NH4(+). The enzyme catalyses pyridoxine 5'-phosphate + O2 = pyridoxal 5'-phosphate + H2O2. Its pathway is cofactor metabolism; pyridoxal 5'-phosphate salvage; pyridoxal 5'-phosphate from pyridoxamine 5'-phosphate: step 1/1. It functions in the pathway cofactor metabolism; pyridoxal 5'-phosphate salvage; pyridoxal 5'-phosphate from pyridoxine 5'-phosphate: step 1/1. Catalyzes the oxidation of either pyridoxine 5'-phosphate (PNP) or pyridoxamine 5'-phosphate (PMP) into pyridoxal 5'-phosphate (PLP). The chain is Pyridoxine/pyridoxamine 5'-phosphate oxidase from Haemophilus influenzae (strain ATCC 51907 / DSM 11121 / KW20 / Rd).